Reading from the N-terminus, the 47-residue chain is Large ribosomal subunit protein bL34 (47 aa).

It belongs to the bacterial ribosomal protein bL34 family.

This chain is Large ribosomal subunit protein bL34, found in Nocardia farcinica (strain IFM 10152).